Reading from the N-terminus, the 522-residue chain is Lysine--tRNA ligase (522 aa).

The 'HIGH' region signature appears at 44–52 (PSGLPHIGT). Residues 290–294 (KISKS) carry the 'KMSKS' region motif. Residue K293 coordinates ATP.

The protein belongs to the class-I aminoacyl-tRNA synthetase family.

It is found in the cytoplasm. It carries out the reaction tRNA(Lys) + L-lysine + ATP = L-lysyl-tRNA(Lys) + AMP + diphosphate. The protein is Lysine--tRNA ligase of Rickettsia rickettsii (strain Iowa).